Reading from the N-terminus, the 267-residue chain is Regulatory protein RecX (267 aa).

The protein belongs to the RecX family.

The protein localises to the cytoplasm. In terms of biological role, modulates RecA activity. This chain is Regulatory protein RecX, found in Staphylococcus epidermidis (strain ATCC 12228 / FDA PCI 1200).